The following is a 215-amino-acid chain: Protein Thf1 (215 aa).

A coiled-coil region spans residues Ile-188 to Gln-209.

The protein belongs to the THF1 family.

Its function is as follows. May be involved in photosynthetic membrane biogenesis. In Synechococcus sp. (strain CC9902), this protein is Protein Thf1.